Here is a 619-residue protein sequence, read N- to C-terminus: Chaperone protein HscA homolog (619 aa).

This sequence belongs to the heat shock protein 70 family.

Its function is as follows. Chaperone involved in the maturation of iron-sulfur cluster-containing proteins. Has a low intrinsic ATPase activity which is markedly stimulated by HscB. This chain is Chaperone protein HscA homolog, found in Pseudomonas aeruginosa (strain UCBPP-PA14).